Consider the following 891-residue polypeptide: Protein kinase kin1 (891 aa).

The segment at 65 to 116 is disordered; it reads GYISPSSQSPHHGPVRSPSSRKPLPASPSRTRDHSLRVPVSGHSYSADEKPR. A Protein kinase domain is found at 125 to 395; that stretch reads YVLGKTIGAG…LEEVLNHPWM (271 aa). ATP contacts are provided by residues 131–139 and Lys154; that span reads IGAGSMGKV. The active-site Proton acceptor is the Asp266. Phosphothreonine is present on Thr528. Disordered stretches follow at residues 528–699, 728–747, and 805–841; these read TPVS…RNNR, TMGN…TDKL, and TPTK…LDDN. Low complexity-rich tracts occupy residues 529-538 and 583-603; these read PVSSVPSSPV and HSPS…IFRR. 2 positions are modified to phosphoserine: Ser535 and Ser536. 5 stretches are compositionally biased toward polar residues: residues 612–629, 649–659, 669–699, 728–742, and 820–829; these read KSST…TSQS, LVTQSAIGRST, ISSQ…RNNR, TMGN…SPSK, and YGSNSTTDSY. A KA1 domain is found at 842 to 891; the sequence is GESPASNLAFEIYIVKVPILSLRGVSFHRISGNSWQYKTLASRILNELKL.

Belongs to the protein kinase superfamily. Ser/Thr protein kinase family.

The protein localises to the cytoplasm. It carries out the reaction L-seryl-[protein] + ATP = O-phospho-L-seryl-[protein] + ADP + H(+). It catalyses the reaction L-threonyl-[protein] + ATP = O-phospho-L-threonyl-[protein] + ADP + H(+). Functionally, has a role in establishing the characteristic rod cell shape. Important for cell polarity and is involved in directing growth to the cell ends. The sequence is that of Protein kinase kin1 (kin1) from Schizosaccharomyces pombe (strain 972 / ATCC 24843) (Fission yeast).